Reading from the N-terminus, the 115-residue chain is C-C motif chemokine 6 (115 aa).

The signal sequence occupies residues 1 to 21 (MRHSKTAISFFILVAVLGSQA). 3 cysteine pairs are disulfide-bonded: C49–C72, C50–C88, and C59–C99.

Belongs to the intercrine beta (chemokine CC) family.

It localises to the secreted. The sequence is that of C-C motif chemokine 6 (Ccl6) from Rattus norvegicus (Rat).